The sequence spans 337 residues: Probable cytosolic iron-sulfur protein assembly protein CIAO1 homolog (337 aa).

WD repeat units follow at residues 15–54, 65–104, 109–148, 154–193, 199–238, 253–292, and 301–337; these read DDTSRVWMTCWHHGGRILASCGDDKAVRVWSLVGEPDSKM, SHTRAVRSVAFSNDGKCLVSASFDASVVVYQQEDGEFAEV, GHESEVKCAVFSKSDEFLATCSRDKSVWFWQQDEDEDFSV, PHTQDVKQVAWHPTEDLLVSCSYDSSIRFYRFDGEDWVTQ, CHVGTVWSIAFDTEGHRLVTVGEDHCIQLFVRENIGSKSA, NTRWPLYSVAWNSTNDVIATGGGDCKIRLFKISSTPESPV, and RHELDVNHVAWNPNPKFSNLLTSASDDGTIRLWELEI.

It belongs to the WD repeat CIA1 family.

Its function is as follows. Essential component of the cytosolic iron-sulfur (Fe/S) protein assembly machinery. Required for the maturation of extramitochondrial Fe/S proteins. This chain is Probable cytosolic iron-sulfur protein assembly protein CIAO1 homolog, found in Caenorhabditis elegans.